Consider the following 344-residue polypeptide: Tetraacyldisaccharide 4'-kinase (344 aa).

68 to 75 (TAGGNGKT) contacts ATP.

It belongs to the LpxK family.

The enzyme catalyses a lipid A disaccharide + ATP = a lipid IVA + ADP + H(+). The protein operates within glycolipid biosynthesis; lipid IV(A) biosynthesis; lipid IV(A) from (3R)-3-hydroxytetradecanoyl-[acyl-carrier-protein] and UDP-N-acetyl-alpha-D-glucosamine: step 6/6. Its function is as follows. Transfers the gamma-phosphate of ATP to the 4'-position of a tetraacyldisaccharide 1-phosphate intermediate (termed DS-1-P) to form tetraacyldisaccharide 1,4'-bis-phosphate (lipid IVA). This is Tetraacyldisaccharide 4'-kinase from Photobacterium profundum (strain SS9).